We begin with the raw amino-acid sequence, 131 residues long: Large ribosomal subunit protein eL32 (131 aa).

The tract at residues 39–77 (LGEKWRRPKGRHSKMRRKLKSKPKMPNPGYGSPKKVRGL) is disordered. Residues 44-61 (RRPKGRHSKMRRKLKSKP) are compositionally biased toward basic residues.

The protein belongs to the eukaryotic ribosomal protein eL32 family.

The polypeptide is Large ribosomal subunit protein eL32 (rpl32) (Methanopyrus kandleri (strain AV19 / DSM 6324 / JCM 9639 / NBRC 100938)).